The chain runs to 223 residues: Killer cell lectin-like receptor subfamily B member 1B allele A (223 aa).

At 1–43 (MDSTTLVYADLNLARIQEPKHDSPPSLSPDTCRCPRWHRLALK) the chain is on the cytoplasmic side. Positions 6–11 (LVYADL) match the ITIM motif motif. Residues 32-35 (CRCP) carry the LCK-binding motif motif. A helical; Signal-anchor for type II membrane protein transmembrane segment spans residues 44–63 (FGCAGLILLVLVVIGLCVLV). Residues 64–223 (LSVQKSSVQK…LNHETPSNDS (160 aa)) lie on the Extracellular side of the membrane. A C-type lectin domain is found at 93–212 (ECPQDWLSHR…STDNRWICQK (120 aa)). 2 cysteine pairs are disulfide-bonded: Cys122–Cys210 and Cys189–Cys202.

Homodimer; disulfide-linked. Interacts with tyrosine kinase LCK. Binds PTPN6/SHP-1 in a phosphorylation-dependent manner. As to expression, expressed in NK cells and a subset of T-cells.

The protein resides in the membrane. Functionally, receptor for CLEC2D/OCIL. Ligand-binding contributes to inhibition of cytotoxic natural killer (NK) cells. May mediate MHC class I-independent 'missing-self' recognition of allografts, tumor cells and virus-infected cells. This Mus musculus (Mouse) protein is Killer cell lectin-like receptor subfamily B member 1B allele A (Klrb1b).